A 512-amino-acid polypeptide reads, in one-letter code: DNA damage-binding protein CMR1 (512 aa).

The segment at 32 to 96 is disordered; it reads SQIKREAGVE…IPNVNDNQLL (65 aa). Residues 34 to 46 show a composition bias toward basic and acidic residues; that stretch reads IKREAGVEDEHLD. The span at 47–60 shows a compositional bias: basic residues; that stretch reads RKRKKKAGSAKKAV. 7 WD repeats span residues 189–230, 241–281, 289–329, 333–373, 390–429, 442–481, and 482–512; these read LTAE…PEDE, LFTK…SEEI, DDPL…TEIN, LSDK…NKPE, DSRL…PEDL, GRWT…LAHL, and PTAT…FLFT.

Belongs to the WD repeat DDB2/WDR76 family.

Functionally, DNA-binding protein that binds to both single- and double-stranded DNA. Binds preferentially to UV-damaged DNA. May be involved in DNA-metabolic processes. This Kluyveromyces lactis (strain ATCC 8585 / CBS 2359 / DSM 70799 / NBRC 1267 / NRRL Y-1140 / WM37) (Yeast) protein is DNA damage-binding protein CMR1.